The sequence spans 333 residues: Glycogenin-1 (333 aa).

At T2 the chain carries N-acetylthreonine. Residues L9, T11, N12, and Y15 each contribute to the UDP site. 4 residues coordinate UDP-alpha-D-glucose: L9, T11, N12, and Y15. Phosphoserine; by PKA; in vitro is present on S44. UDP is bound at residue R77. UDP-alpha-D-glucose is bound by residues R77, K86, D102, A103, D104, N133, S134, D160, D163, and Q164. Residues D102, A103, and D104 each contribute to the UDP site. D102 is a binding site for Mn(2+). Residue D104 participates in Mn(2+) binding. O-linked (Glc...) tyrosine glycosylation is present at Y195. UDP contacts are provided by H212, G215, and K218. H212 contributes to the Mn(2+) binding site. G215 and K218 together coordinate UDP-alpha-D-glucose. The interaction with GYS1 stretch occupies residues 284–316 (SHLSLGETPATTQPFVSSEERKERWEQGQADYM).

This sequence belongs to the glycosyltransferase 8 family. Glycogenin subfamily. Part of the GYS1-GYG1 complex, a heterooctamer composed of a tetramer of GYS1 and 2 dimers of GYG1, where each GYS1 protomer binds to one GYG1 subunit (via GYG1 C-terminus); the GYS1 tetramer may dissociate from GYG1 dimers to continue glycogen polymerization on its own. May also form a heterooctamer complex with GYS2 (via GYG1 C-terminus). Mn(2+) is required as a cofactor. In terms of processing, self-glycosylated by the transfer of glucose residues from UDP-glucose to itself, forming an alpha-1,4-glycan of around 10 residues attached to Tyr-195. Post-translationally, phosphorylated. In terms of tissue distribution, detected in heart, skeletal muscle, brain and testis, and at lower levels in kidney.

The protein resides in the cytoplasm. It localises to the nucleus. It carries out the reaction L-tyrosyl-[glycogenin] + UDP-alpha-D-glucose = alpha-D-glucosyl-L-tyrosyl-[glycogenin] + UDP + H(+). The enzyme catalyses [1,4-alpha-D-glucosyl](n)-L-tyrosyl-[glycogenin] + UDP-alpha-D-glucose = [1,4-alpha-D-glucosyl](n+1)-L-tyrosyl-[glycogenin] + UDP + H(+). Its pathway is glycan biosynthesis; glycogen biosynthesis. Functionally, glycogenin participates in the glycogen biosynthetic process along with glycogen synthase and glycogen branching enzyme. It catalyzes the formation of a short alpha (1,4)-glucosyl chain covalently attached via a glucose 1-O-tyrosyl linkage to internal tyrosine residues and these chains act as primers for the elongation reaction catalyzed by glycogen synthase. The protein is Glycogenin-1 (GYG1) of Oryctolagus cuniculus (Rabbit).